The following is a 535-amino-acid chain: CTP synthase (535 aa).

Residues 1-268 (MKTKYIFVTG…DSLVCKKLEL (268 aa)) are amidoligase domain. Residue Ser-14 participates in CTP binding. Residue Ser-14 coordinates UTP. 15-20 (SLGKGI) contacts ATP. Residue Tyr-55 coordinates L-glutamine. Asp-72 contacts ATP. Residues Asp-72 and Glu-142 each contribute to the Mg(2+) site. Residues 149–151 (DIE), 189–194 (KTKPTQ), and Lys-225 each bind CTP. Residues 189–194 (KTKPTQ) and Lys-225 contribute to the UTP site. The 243-residue stretch at 293–535 (TIGLVGKYVE…IKVACTVKEK (243 aa)) folds into the Glutamine amidotransferase type-1 domain. Gly-355 serves as a coordination point for L-glutamine. Cys-382 acts as the Nucleophile; for glutamine hydrolysis in catalysis. L-glutamine contacts are provided by residues 383–386 (LGMQ), Glu-406, and Arg-463. Active-site residues include His-508 and Glu-510.

The protein belongs to the CTP synthase family. Homotetramer.

It carries out the reaction UTP + L-glutamine + ATP + H2O = CTP + L-glutamate + ADP + phosphate + 2 H(+). The enzyme catalyses L-glutamine + H2O = L-glutamate + NH4(+). The catalysed reaction is UTP + NH4(+) + ATP = CTP + ADP + phosphate + 2 H(+). Its pathway is pyrimidine metabolism; CTP biosynthesis via de novo pathway; CTP from UDP: step 2/2. Its activity is regulated as follows. Allosterically activated by GTP, when glutamine is the substrate; GTP has no effect on the reaction when ammonia is the substrate. The allosteric effector GTP functions by stabilizing the protein conformation that binds the tetrahedral intermediate(s) formed during glutamine hydrolysis. Inhibited by the product CTP, via allosteric rather than competitive inhibition. Functionally, catalyzes the ATP-dependent amination of UTP to CTP with either L-glutamine or ammonia as the source of nitrogen. Regulates intracellular CTP levels through interactions with the four ribonucleotide triphosphates. The protein is CTP synthase of Clostridium acetobutylicum (strain ATCC 824 / DSM 792 / JCM 1419 / IAM 19013 / LMG 5710 / NBRC 13948 / NRRL B-527 / VKM B-1787 / 2291 / W).